The primary structure comprises 263 residues: Type-2Ba cytolytic delta-endotoxin (263 aa).

It belongs to the cyt1/cyt2 endotoxin family. Post-translationally, active after proteolytic processing.

Its function is as follows. Kills the larvae of dipteran insects by making pores in the epithelial cell membrane of the insect midgut. The sequence is that of Type-2Ba cytolytic delta-endotoxin (cyt2Ba1) from Bacillus thuringiensis subsp. israelensis.